The primary structure comprises 93 residues: Integration host factor subunit beta (93 aa).

This sequence belongs to the bacterial histone-like protein family. As to quaternary structure, heterodimer of an alpha and a beta chain.

This protein is one of the two subunits of integration host factor, a specific DNA-binding protein that functions in genetic recombination as well as in transcriptional and translational control. The sequence is that of Integration host factor subunit beta from Glaesserella parasuis serovar 5 (strain SH0165) (Haemophilus parasuis).